The sequence spans 240 residues: Fimbriae Y protein (240 aa).

It localises to the fimbrium. In Salmonella typhimurium (strain LT2 / SGSC1412 / ATCC 700720), this protein is Fimbriae Y protein (fimY).